An 87-amino-acid polypeptide reads, in one-letter code: U3-theraphotoxin-Hhn1a 18 (87 aa).

The signal sequence occupies residues 1–24 (MVNTKASMFLTFAGLVLLFVVCYA). Residues 25-52 (SESEEKEFPKEMLSSIFAVDNDFKQEER) constitute a propeptide that is removed on maturation. Intrachain disulfides connect C54–C67, C61–C72, and C66–C79.

It belongs to the neurotoxin 10 (Hwtx-1) family. 51 (Hntx-8) subfamily. Hntx-8 sub-subfamily. In terms of tissue distribution, expressed by the venom gland.

Its subcellular location is the secreted. Its function is as follows. Ion channel inhibitor. The polypeptide is U3-theraphotoxin-Hhn1a 18 (Cyriopagopus hainanus (Chinese bird spider)).